The sequence spans 221 residues: Adenylate kinase (221 aa).

10–15 is an ATP binding site; it reads GAGKGT. The segment at 30–59 is NMP; that stretch reads STGDMLRAAVKAGTPLGVEAKKVMDAGGLV. Residues Thr31, Arg36, 57-59, 85-88, and Gln92 contribute to the AMP site; these read GLV and GFPR. The tract at residues 122-159 is LID; it reads GRRVHVASGRTYHVKYNPPKTEGVDDETGEALIQRDDD. ATP-binding positions include Arg123 and 132–133; that span reads TY. The AMP site is built by Arg156 and Arg167. Gly207 serves as a coordination point for ATP.

Belongs to the adenylate kinase family. Monomer.

The protein resides in the cytoplasm. It catalyses the reaction AMP + ATP = 2 ADP. Its pathway is purine metabolism; AMP biosynthesis via salvage pathway; AMP from ADP: step 1/1. In terms of biological role, catalyzes the reversible transfer of the terminal phosphate group between ATP and AMP. Plays an important role in cellular energy homeostasis and in adenine nucleotide metabolism. The protein is Adenylate kinase of Cupriavidus necator (strain ATCC 17699 / DSM 428 / KCTC 22496 / NCIMB 10442 / H16 / Stanier 337) (Ralstonia eutropha).